The primary structure comprises 429 residues: Adenylosuccinate synthetase (429 aa).

GTP contacts are provided by residues 12–18 (GDEGKGK) and 40–42 (GHT). Asp-13 acts as the Proton acceptor in catalysis. Mg(2+)-binding residues include Asp-13 and Gly-40. IMP is bound by residues 13 to 16 (DEGK), 38 to 41 (NAGH), Thr-128, Arg-142, Gln-223, Thr-238, and Arg-302. Catalysis depends on His-41, which acts as the Proton donor. 298 to 304 (TVTGRPR) contributes to the substrate binding site. GTP is bound by residues Arg-304, 330–332 (LLD), and 412–414 (SVG).

The protein belongs to the adenylosuccinate synthetase family. In terms of assembly, homodimer. Mg(2+) serves as cofactor.

It is found in the cytoplasm. It carries out the reaction IMP + L-aspartate + GTP = N(6)-(1,2-dicarboxyethyl)-AMP + GDP + phosphate + 2 H(+). The protein operates within purine metabolism; AMP biosynthesis via de novo pathway; AMP from IMP: step 1/2. In terms of biological role, plays an important role in the de novo pathway of purine nucleotide biosynthesis. Catalyzes the first committed step in the biosynthesis of AMP from IMP. The polypeptide is Adenylosuccinate synthetase (Lactobacillus johnsonii (strain CNCM I-12250 / La1 / NCC 533)).